The following is a 157-amino-acid chain: Cytochrome b6-f complex subunit 4 (157 aa).

The next 3 membrane-spanning stretches (helical) occupy residues 35–55 (ILYIFPVVILGTISFSLGLGV), 94–114 (LVGVLSLASVPVILVLTAFIE), and 130–150 (LVYLTSTCYALWLGYGSVLGI).

The protein belongs to the cytochrome b family. PetD subfamily. The 4 large subunits of the cytochrome b6-f complex are cytochrome b6, subunit IV (17 kDa polypeptide, petD), cytochrome f and the Rieske protein, while the 4 small subunits are petG, petL, petM and petN. The complex functions as a dimer.

The protein resides in the plastid. It localises to the chloroplast thylakoid membrane. Functionally, component of the cytochrome b6-f complex, which mediates electron transfer between photosystem II (PSII) and photosystem I (PSI), cyclic electron flow around PSI, and state transitions. The polypeptide is Cytochrome b6-f complex subunit 4 (Amphidinium carterae (Dinoflagellate)).